Here is a 671-residue protein sequence, read N- to C-terminus: cGMP-dependent protein kinase 1 (671 aa).

Position 2 is an N-acetylserine (S2). Residues S2 to T59 are a coiled coil. Residues S2–D102 form a required for dimerization region. The segment at A9 to Q44 is leucine-zipper. An autoinhibitory domain region spans residues P50–H75. At T59 the chain carries Phosphothreonine; by autocatalysis. A cGMP-binding, high affinity region spans residues F103–P220. Residues G167 to A170, R177 to T178, R282, G291 to A294, R301 to T302, and Y336 each bind 3',5'-cyclic GMP. A cGMP-binding, low affinity region spans residues T221–A341. The Protein kinase domain maps to F360–F619. Residues L366–V374 and K390 each bind ATP. D484 (proton acceptor) is an active-site residue. Residue T515 is modified to Phosphothreonine. The AGC-kinase C-terminal domain occupies E620–F671. Residues P635–F671 form a disordered region. Residues F652 to P661 are compositionally biased toward acidic residues.

It belongs to the protein kinase superfamily. AGC Ser/Thr protein kinase family. cGMP subfamily. As to quaternary structure, isoform alpha: parallel homodimer or heterodimer and also heterotetramer. Interacts directly with PPP1R12A. Non-covalent dimer of dimer of PRKG1-PRKG1 and PPP1R12A-PPP1R12A. This interaction targets PRKG1 to stress fibers to mediate smooth muscle cell relaxation and vasodilation in responses to rises in cGMP. Isoform beta: antiparallel homodimer. Part of cGMP kinase signaling complex at least composed of ACTA2/alpha-actin, CNN1/calponin H1, PLN/phospholamban, PRKG1 and ITPR1. Interacts with IRAG1. Forms a stable complex with ITPR1, IRAG1, and isoform beta of PRKG1. Interacts with TRPC7 (via ankyrin repeat domain). Isoform alpha interacts with RGS2. Interacts with GTF2I. Post-translationally, autophosphorylation increases kinase activity. 65 kDa monomer is produced by proteolytic cleavage.

It localises to the cytoplasm. The catalysed reaction is L-seryl-[protein] + ATP = O-phospho-L-seryl-[protein] + ADP + H(+). It catalyses the reaction L-threonyl-[protein] + ATP = O-phospho-L-threonyl-[protein] + ADP + H(+). Its activity is regulated as follows. In the absence of cGMP, PRKG1 activity is suppressed by autoinhibitory contacts. Serine/threonine protein kinase that acts as a key mediator of the nitric oxide (NO)/cGMP signaling pathway. GMP binding activates PRKG1, which phosphorylates serines and threonines on many cellular proteins. Numerous protein targets for PRKG1 phosphorylation are implicated in modulating cellular calcium, but the contribution of each of these targets may vary substantially among cell types. Proteins that are phosphorylated by PRKG1 regulate platelet activation and adhesion, smooth muscle contraction, cardiac function, gene expression, feedback of the NO-signaling pathway, and other processes involved in several aspects of the CNS like axon guidance, hippocampal and cerebellar learning, circadian rhythm and nociception. Smooth muscle relaxation is mediated through lowering of intracellular free calcium, by desensitization of contractile proteins to calcium, and by decrease in the contractile state of smooth muscle or in platelet activation. Regulates intracellular calcium levels via several pathways: phosphorylates IRAG1 and inhibits IP3-induced Ca(2+) release from intracellular stores, phosphorylation of KCNMA1 (BKCa) channels decreases intracellular Ca(2+) levels, which leads to increased opening of this channel. PRKG1 phosphorylates the canonical transient receptor potential channel (TRPC) family which inactivates the associated inward calcium current. Another mode of action of NO/cGMP/PKGI signaling involves PKGI-mediated inactivation of the Ras homolog gene family member A (RhoA). Phosphorylation of RHOA by PRKG1 blocks the action of this protein in myriad processes: regulation of RHOA translocation; decreasing contraction; controlling vesicle trafficking, reduction of myosin light chain phosphorylation resulting in vasorelaxation. Activation of PRKG1 by NO signaling also alters gene expression in a number of tissues. In smooth muscle cells, increased cGMP and PRKG1 activity influence expression of smooth muscle-specific contractile proteins, levels of proteins in the NO/cGMP signaling pathway, down-regulation of the matrix proteins osteopontin and thrombospondin-1 to limit smooth muscle cell migration and phenotype. Regulates vasodilator-stimulated phosphoprotein (VASP) functions in platelets and smooth muscle. This is cGMP-dependent protein kinase 1 (PRKG1) from Oryctolagus cuniculus (Rabbit).